The following is a 338-amino-acid chain: Glycerol-3-phosphate dehydrogenase [NAD(P)+] (338 aa).

Residues W11, R30, and K109 each contribute to the NADPH site. K109, G143, and S145 together coordinate sn-glycerol 3-phosphate. A147 lines the NADPH pocket. The sn-glycerol 3-phosphate site is built by K198, D251, S261, R262, and N263. K198 functions as the Proton acceptor in the catalytic mechanism. R262 is an NADPH binding site. NADPH-binding residues include V286 and E288.

It belongs to the NAD-dependent glycerol-3-phosphate dehydrogenase family.

The protein resides in the cytoplasm. The enzyme catalyses sn-glycerol 3-phosphate + NAD(+) = dihydroxyacetone phosphate + NADH + H(+). The catalysed reaction is sn-glycerol 3-phosphate + NADP(+) = dihydroxyacetone phosphate + NADPH + H(+). It participates in membrane lipid metabolism; glycerophospholipid metabolism. Its function is as follows. Catalyzes the reduction of the glycolytic intermediate dihydroxyacetone phosphate (DHAP) to sn-glycerol 3-phosphate (G3P), the key precursor for phospholipid synthesis. The polypeptide is Glycerol-3-phosphate dehydrogenase [NAD(P)+] (Cupriavidus necator (strain ATCC 17699 / DSM 428 / KCTC 22496 / NCIMB 10442 / H16 / Stanier 337) (Ralstonia eutropha)).